Consider the following 816-residue polypeptide: Neuronal PAS domain-containing protein 2 (816 aa).

Over residues 1 to 10 (MDEDEKDRAK) the composition is skewed to basic and acidic residues. The interval 1-21 (MDEDEKDRAKRASRNKSEKKR) is disordered. Residues 1–61 (MDEDEKDRAK…VIGFLQKHNE (61 aa)) are sufficient for heterodimer formation with BMAL1, E-box binding and for the effect of NADPH. The region spanning 9–59 (AKRASRNKSEKKRRDQFNVLIKELSSMLPGNTRKMDKTTVLEKVIGFLQKH) is the bHLH domain. The 71-residue stretch at 82–152 (NEEFTQLMLE…KILSSHMLVT (71 aa)) folds into the PAS 1 domain. The heme b site is built by histidine 119 and histidine 171. One can recognise a PAS 2 domain in the interval 237–307 (FLKEMCVADE…RCHQHLMQFG (71 aa)). The PAC domain maps to 311–354 (SCCYRFLTKGQQWIWLQTHYYITYHQWNSKPEFIVCTHSVVSYA). Disordered stretches follow at residues 364–431 (LALE…STPT), 610–639 (ISAQ…SQFS), 685–705 (QPMM…RTGR), and 742–816 (PSFP…LSES). Low complexity predominate over residues 400–413 (SGLPSSPSPSASSR). The span at 420–431 (HTAMSEPTSTPT) shows a compositional bias: polar residues. The span at 623–639 (LLPASGRSLSSLPSQFS) shows a compositional bias: low complexity. The segment covering 745–759 (PASRPSPLQPAQAQQ) has biased composition (low complexity). A compositionally biased stretch (polar residues) spans 780 to 789 (LLSTFSQQPG). Residues 806–816 (PSRRVSRLSES) show a composition bias toward basic residues.

Component of the circadian clock oscillator which includes the CRY proteins, CLOCK or NPAS2, BMAL1 or BMAL2, CSNK1D and/or CSNK1E, TIMELESS and the PER proteins. Efficient DNA binding requires dimerization with another bHLH protein. Interacts with NCOA3, KAT2B and CREBBP. Forms a heterodimer with BMAL1 and this heterodimerization is required for E-box-dependent transactivation. Interacts with EP300. Heme is required as a cofactor. Expressed in the retinal ganglion cells (at protein level). Expressed in the hypothalamic suprachiasmatic nuclei (SCN) of the brain. Also found in spinal cord, and to a lesser extent in colon, small intestine and uterus. Exhibits a diurnal variation in its expression in the brain.

The protein resides in the nucleus. Carbon monoxide (CO) and the redox state of the cell can modulate the transcriptional activity of the NPAS2-BMAL1 heterodimer. NADH and NADPH enhance the DNA-binding activity of the heterodimer whereas CO binds the heme group in NPAS2 and inhibits the DNA-binding activity of the heterodimer. Functionally, transcriptional activator which forms a core component of the circadian clock. The circadian clock, an internal time-keeping system, regulates various physiological processes through the generation of approximately 24 hour circadian rhythms in gene expression, which are translated into rhythms in metabolism and behavior. It is derived from the Latin roots 'circa' (about) and 'diem' (day) and acts as an important regulator of a wide array of physiological functions including metabolism, sleep, body temperature, blood pressure, endocrine, immune, cardiovascular, and renal function. Consists of two major components: the central clock, residing in the suprachiasmatic nucleus (SCN) of the brain, and the peripheral clocks that are present in nearly every tissue and organ system. Both the central and peripheral clocks can be reset by environmental cues, also known as Zeitgebers (German for 'timegivers'). The predominant Zeitgeber for the central clock is light, which is sensed by retina and signals directly to the SCN. The central clock entrains the peripheral clocks through neuronal and hormonal signals, body temperature and feeding-related cues, aligning all clocks with the external light/dark cycle. Circadian rhythms allow an organism to achieve temporal homeostasis with its environment at the molecular level by regulating gene expression to create a peak of protein expression once every 24 hours to control when a particular physiological process is most active with respect to the solar day. Transcription and translation of core clock components (CLOCK, NPAS2, BMAL1, BMAL2, PER1, PER2, PER3, CRY1 and CRY2) plays a critical role in rhythm generation, whereas delays imposed by post-translational modifications (PTMs) are important for determining the period (tau) of the rhythms (tau refers to the period of a rhythm and is the length, in time, of one complete cycle). A diurnal rhythm is synchronized with the day/night cycle, while the ultradian and infradian rhythms have a period shorter and longer than 24 hours, respectively. Disruptions in the circadian rhythms contribute to the pathology of cardiovascular diseases, cancer, metabolic syndromes and aging. A transcription/translation feedback loop (TTFL) forms the core of the molecular circadian clock mechanism. Transcription factors, CLOCK or NPAS2 and BMAL1 or BMAL2, form the positive limb of the feedback loop, act in the form of a heterodimer and activate the transcription of core clock genes and clock-controlled genes (involved in key metabolic processes), harboring E-box elements (5'-CACGTG-3') within their promoters. The core clock genes: PER1/2/3 and CRY1/2 which are transcriptional repressors form the negative limb of the feedback loop and interact with the CLOCK|NPAS2-BMAL1|BMAL2 heterodimer inhibiting its activity and thereby negatively regulating their own expression. This heterodimer also activates nuclear receptors NR1D1/2 and RORA/B/G, which form a second feedback loop and which activate and repress BMAL1 transcription, respectively. The NPAS2-BMAL1 heterodimer positively regulates the expression of MAOA, F7 and LDHA and modulates the circadian rhythm of daytime contrast sensitivity by regulating the rhythmic expression of adenylate cyclase type 1 (ADCY1) in the retina. NPAS2 plays an important role in sleep homeostasis and in maintaining circadian behaviors in normal light/dark and feeding conditions and in the effective synchronization of feeding behavior with scheduled food availability. Regulates the gene transcription of key metabolic pathways in the liver and is involved in DNA damage response by regulating several cell cycle and DNA repair genes. Controls the circadian rhythm of NR0B2 expression by binding rhythmically to its promoter. Mediates the diurnal variation in the expression of GABARA1 receptor in the brain and contributes to the regulation of anxiety-like behaviors and GABAergic neurotransmission in the ventral striatum. The polypeptide is Neuronal PAS domain-containing protein 2 (Npas2) (Mus musculus (Mouse)).